The chain runs to 217 residues: 3,4-dihydroxy-2-butanone 4-phosphate synthase (217 aa).

Residues 37–38, aspartate 42, 150–154, and glutamate 174 contribute to the D-ribulose 5-phosphate site; these read RE and RRGHT. Mg(2+) is bound at residue glutamate 38. Histidine 153 provides a ligand contact to Mg(2+).

This sequence belongs to the DHBP synthase family. Homodimer. Mg(2+) is required as a cofactor. Requires Mn(2+) as cofactor.

It carries out the reaction D-ribulose 5-phosphate = (2S)-2-hydroxy-3-oxobutyl phosphate + formate + H(+). It functions in the pathway cofactor biosynthesis; riboflavin biosynthesis; 2-hydroxy-3-oxobutyl phosphate from D-ribulose 5-phosphate: step 1/1. Its function is as follows. Catalyzes the conversion of D-ribulose 5-phosphate to formate and 3,4-dihydroxy-2-butanone 4-phosphate. This Tolumonas auensis (strain DSM 9187 / NBRC 110442 / TA 4) protein is 3,4-dihydroxy-2-butanone 4-phosphate synthase.